The sequence spans 241 residues: Ribonuclease PH (241 aa).

Phosphate-binding positions include Arg-89 and 127–129 (GTR).

It belongs to the RNase PH family. In terms of assembly, homohexameric ring arranged as a trimer of dimers.

It catalyses the reaction tRNA(n+1) + phosphate = tRNA(n) + a ribonucleoside 5'-diphosphate. Phosphorolytic 3'-5' exoribonuclease that plays an important role in tRNA 3'-end maturation. Removes nucleotide residues following the 3'-CCA terminus of tRNAs; can also add nucleotides to the ends of RNA molecules by using nucleoside diphosphates as substrates, but this may not be physiologically important. Probably plays a role in initiation of 16S rRNA degradation (leading to ribosome degradation) during starvation. This chain is Ribonuclease PH, found in Xanthomonas euvesicatoria pv. vesicatoria (strain 85-10) (Xanthomonas campestris pv. vesicatoria).